The sequence spans 534 residues: Cargo protein 2 (534 aa).

In terms of assembly, homododecamer. Localizes inside the capsid.

The protein localises to the virion. Its function is as follows. Protein that is stored in high quantity in the viral capsid and may play a role during ejection. This is Cargo protein 2 from Bacteroides intestinalis (Bacteroides phage PhiCrAss001).